A 1320-amino-acid polypeptide reads, in one-letter code: FERM and PDZ domain-containing protein 4 (1320 aa).

Residues 33–66 (QVPPYGWEMMTNRDGRDYFINHMTQAIPFDDPRF) enclose the WW domain. The PDZ domain maps to 78 to 155 (KVEMRRDPVL…SILLTVIQPY (78 aa)). Residues 204-519 (NVLKVYLENG…GYYRLLVDSR (316 aa)) enclose the FERM domain. 6 disordered regions span residues 809-847 (APPP…EIPV), 897-927 (YSPE…QKQS), 949-981 (TEFP…PPKV), 1024-1050 (KRKS…QQGT), 1114-1139 (PRGP…ADDA), and 1204-1274 (GHFS…ATFE). Residues 900-913 (ESSSDSGNETNSSE) are compositionally biased toward low complexity. The segment covering 1204–1217 (GHFSLQSSQGSSVD) has biased composition (polar residues). Residues 1223 to 1232 (GSSSSACATP) are compositionally biased toward low complexity.

In terms of assembly, interacts (via C-terminus) with DLG1, DLG2, DLG3 and DLG4/PSD95. Interacts (via N-terminus) with ARHGEF7; the interaction is mediated by the PDZ domain. Interacts with GPSM2 (via TPR repeat region). In terms of tissue distribution, expressed in various regions of the brain, including cortex, hippocampus, cerebellum, olfactory bulb and medial habenular nucleus.

The protein localises to the cell projection. It is found in the dendritic spine. In terms of biological role, positive regulator of dendritic spine morphogenesis and density. Required for the maintenance of excitatory synaptic transmission. Binds phosphatidylinositol 4,5-bisphosphate. The sequence is that of FERM and PDZ domain-containing protein 4 (Frmpd4) from Mus musculus (Mouse).